A 199-amino-acid polypeptide reads, in one-letter code: Inner membrane-spanning protein YciB (199 aa).

5 consecutive transmembrane segments (helical) span residues Leu3 to Tyr23, Val47 to Leu67, Trp76 to Phe96, Leu119 to Tyr139, and Phe149 to Met169. Residues Ala180 to Pro199 form a disordered region.

This sequence belongs to the YciB family.

The protein resides in the cell inner membrane. Functionally, plays a role in cell envelope biogenesis, maintenance of cell envelope integrity and membrane homeostasis. This is Inner membrane-spanning protein YciB from Delftia acidovorans (strain DSM 14801 / SPH-1).